The sequence spans 231 residues: Protein crossbronx homolog (231 aa).

Residues 14–168 form the UBC core domain; the sequence is LQEYKILTEY…VEECVRLSQA (155 aa).

It belongs to the ubiquitin-conjugating enzyme family. FTS subfamily.

The chain is Protein crossbronx homolog from Culex quinquefasciatus (Southern house mosquito).